The following is a 192-amino-acid chain: Ion-translocating oxidoreductase complex subunit B (192 aa).

The tract at residues M1–S26 is hydrophobic. The region spanning E32–V91 is the 4Fe-4S domain. Residues C49, C52, C57, C74, C117, C120, C123, C127, C147, C150, C153, and C157 each contribute to the [4Fe-4S] cluster site. 4Fe-4S ferredoxin-type domains follow at residues M108 to R137 and A138 to V167.

This sequence belongs to the 4Fe4S bacterial-type ferredoxin family. RnfB subfamily. As to quaternary structure, the complex is composed of six subunits: RsxA, RsxB, RsxC, RsxD, RsxE and RsxG. The cofactor is [4Fe-4S] cluster.

It localises to the cell inner membrane. Functionally, part of a membrane-bound complex that couples electron transfer with translocation of ions across the membrane. Required to maintain the reduced state of SoxR. The chain is Ion-translocating oxidoreductase complex subunit B from Shigella dysenteriae serotype 1 (strain Sd197).